The sequence spans 415 residues: Lipid II:glycine glycyltransferase (415 aa).

Belongs to the FemABX family.

Its subcellular location is the cytoplasm. The catalysed reaction is beta-D-GlcNAc-(1-&gt;4)-Mur2Ac(oyl-L-Ala-D-isoglutaminyl-L-Lys-D-Ala-D-Ala)-di-trans,octa-cis-undecaprenyl diphosphate + glycyl-tRNA(Gly) = beta-D-GlcNAc-(1-&gt;4)-Mur2Ac(oyl-L-Ala-D-isoglutaminyl-L-Lys-(N(6)-Gly)-D-Ala-D-Ala)-di-trans,octa-cis-undecaprenyl diphosphate + tRNA(Gly) + H(+). Functionally, catalyzes the incorporation of amino acid(s) into the interchain peptide bridge of peptidoglycan, using aminoacyl-tRNA as amino acid donor. This Staphylococcus saprophyticus subsp. saprophyticus (strain ATCC 15305 / DSM 20229 / NCIMB 8711 / NCTC 7292 / S-41) protein is Lipid II:glycine glycyltransferase (femX).